Here is a 340-residue protein sequence, read N- to C-terminus: MTKITVVGAGSWGTALAMVLADNGHDVRIWGNRSELMDEINTKHENSRYLPGITLPSTIVAYSSLEEALVDVNVVLIVVPTKAYREVLQDMKKYVAGPTTWIHASKGIEPGTSKRISEVIEEEIPEDLIKDVVVLSGPSHAEEVGLRQATTVTSAAKRMEAAEEVQDLFMNSYFRVYTNPDIVGVELGGALKNIIALAAGITDGLGLGDNAKAALMTRGLTEIARLGRKMGGNPLTFAGLTGMGDLIVTCTSVHSRNWRAGNMLGKGHSLEEVLESMGMVVEGVRTTKAAHELAEKMEVEMPITAALYDVLFNGNNVKDAVGSLMGRVRKHEVEAIPDLL.

Positions 11, 12, 33, and 106 each coordinate NADPH. Sn-glycerol 3-phosphate-binding residues include Lys-106, Gly-137, and Ser-139. Position 141 (Ala-141) interacts with NADPH. The sn-glycerol 3-phosphate site is built by Lys-192, Asp-245, Ser-255, Arg-256, and Asn-257. The active-site Proton acceptor is Lys-192. An NADPH-binding site is contributed by Arg-256. 2 residues coordinate NADPH: Val-280 and Glu-282.

Belongs to the NAD-dependent glycerol-3-phosphate dehydrogenase family.

It is found in the cytoplasm. It carries out the reaction sn-glycerol 3-phosphate + NAD(+) = dihydroxyacetone phosphate + NADH + H(+). It catalyses the reaction sn-glycerol 3-phosphate + NADP(+) = dihydroxyacetone phosphate + NADPH + H(+). It functions in the pathway membrane lipid metabolism; glycerophospholipid metabolism. In terms of biological role, catalyzes the reduction of the glycolytic intermediate dihydroxyacetone phosphate (DHAP) to sn-glycerol 3-phosphate (G3P), the key precursor for phospholipid synthesis. In Bacillus anthracis (strain A0248), this protein is Glycerol-3-phosphate dehydrogenase [NAD(P)+].